The sequence spans 384 residues: 8-amino-7-oxononanoate synthase (384 aa).

Arginine 21 is a binding site for substrate. A pyridoxal 5'-phosphate-binding site is contributed by 108-109; that stretch reads GF. A substrate-binding site is contributed by histidine 133. Pyridoxal 5'-phosphate-binding residues include serine 179, histidine 207, and threonine 233. N6-(pyridoxal phosphate)lysine is present on lysine 236. Threonine 352 is a substrate binding site.

It belongs to the class-II pyridoxal-phosphate-dependent aminotransferase family. BioF subfamily. As to quaternary structure, homodimer. Pyridoxal 5'-phosphate is required as a cofactor.

The enzyme catalyses 6-carboxyhexanoyl-[ACP] + L-alanine + H(+) = (8S)-8-amino-7-oxononanoate + holo-[ACP] + CO2. The protein operates within cofactor biosynthesis; biotin biosynthesis. In terms of biological role, catalyzes the decarboxylative condensation of pimeloyl-[acyl-carrier protein] and L-alanine to produce 8-amino-7-oxononanoate (AON), [acyl-carrier protein], and carbon dioxide. This chain is 8-amino-7-oxononanoate synthase, found in Enterobacter sp. (strain 638).